A 151-amino-acid chain; its full sequence is tRNA-specific adenosine deaminase (151 aa).

In terms of domain architecture, CMP/dCMP-type deaminase spans 1–111; the sequence is MGKEYFLKVA…LDKKHGGVVS (111 aa). His-52 contacts Zn(2+). Residue Glu-54 is the Proton donor of the active site. Residues Cys-82 and Cys-85 each contribute to the Zn(2+) site.

The protein belongs to the cytidine and deoxycytidylate deaminase family. Homodimer. It depends on Zn(2+) as a cofactor.

The enzyme catalyses adenosine(34) in tRNA + H2O + H(+) = inosine(34) in tRNA + NH4(+). In terms of biological role, catalyzes the deamination of adenosine to inosine at the wobble position 34 of tRNA(Arg2). The polypeptide is tRNA-specific adenosine deaminase (Aquifex aeolicus (strain VF5)).